Here is a 364-residue protein sequence, read N- to C-terminus: DNA replication and repair protein RecF (364 aa).

30–37 (GLNAQGKS) lines the ATP pocket.

The protein belongs to the RecF family.

The protein localises to the cytoplasm. Its function is as follows. The RecF protein is involved in DNA metabolism; it is required for DNA replication and normal SOS inducibility. RecF binds preferentially to single-stranded, linear DNA. It also seems to bind ATP. This chain is DNA replication and repair protein RecF, found in Caldanaerobacter subterraneus subsp. tengcongensis (strain DSM 15242 / JCM 11007 / NBRC 100824 / MB4) (Thermoanaerobacter tengcongensis).